Consider the following 436-residue polypeptide: Methylenetetrahydrofolate--tRNA-(uracil-5-)-methyltransferase TrmFO (436 aa).

G8 to G13 provides a ligand contact to FAD.

This sequence belongs to the MnmG family. TrmFO subfamily. The cofactor is FAD.

The protein resides in the cytoplasm. The catalysed reaction is uridine(54) in tRNA + (6R)-5,10-methylene-5,6,7,8-tetrahydrofolate + NADH + H(+) = 5-methyluridine(54) in tRNA + (6S)-5,6,7,8-tetrahydrofolate + NAD(+). The enzyme catalyses uridine(54) in tRNA + (6R)-5,10-methylene-5,6,7,8-tetrahydrofolate + NADPH + H(+) = 5-methyluridine(54) in tRNA + (6S)-5,6,7,8-tetrahydrofolate + NADP(+). Catalyzes the folate-dependent formation of 5-methyl-uridine at position 54 (M-5-U54) in all tRNAs. The polypeptide is Methylenetetrahydrofolate--tRNA-(uracil-5-)-methyltransferase TrmFO (Syntrophomonas wolfei subsp. wolfei (strain DSM 2245B / Goettingen)).